The sequence spans 466 residues: Ribulose bisphosphate carboxylase large chain (466 aa).

Lysine 5 bears the N6,N6,N6-trimethyllysine mark. 2 residues coordinate substrate: asparagine 114 and threonine 164. Catalysis depends on lysine 166, which acts as the Proton acceptor. Lysine 168 provides a ligand contact to substrate. The Mg(2+) site is built by lysine 192, aspartate 194, and glutamate 195. Residue lysine 192 is modified to N6-carboxylysine. Histidine 285 serves as the catalytic Proton acceptor. Residues arginine 286, histidine 318, and serine 370 each coordinate substrate.

This sequence belongs to the RuBisCO large chain family. Type I subfamily. Heterohexadecamer of 8 large chains and 8 small chains; disulfide-linked. The disulfide link is formed within the large subunit homodimers. The cofactor is Mg(2+). In terms of processing, the disulfide bond which can form in the large chain dimeric partners within the hexadecamer appears to be associated with oxidative stress and protein turnover.

It is found in the plastid. It localises to the chloroplast. It catalyses the reaction 2 (2R)-3-phosphoglycerate + 2 H(+) = D-ribulose 1,5-bisphosphate + CO2 + H2O. The enzyme catalyses D-ribulose 1,5-bisphosphate + O2 = 2-phosphoglycolate + (2R)-3-phosphoglycerate + 2 H(+). RuBisCO catalyzes two reactions: the carboxylation of D-ribulose 1,5-bisphosphate, the primary event in carbon dioxide fixation, as well as the oxidative fragmentation of the pentose substrate in the photorespiration process. Both reactions occur simultaneously and in competition at the same active site. This is Ribulose bisphosphate carboxylase large chain from Eremothamnus marlothianus.